The sequence spans 337 residues: tRNA N6-adenosine threonylcarbamoyltransferase (337 aa).

Positions 111 and 115 each coordinate Fe cation. Residues 134 to 138, aspartate 167, glycine 180, and asparagine 272 each bind substrate; that span reads LVSGG. Aspartate 300 contacts Fe cation.

This sequence belongs to the KAE1 / TsaD family. It depends on Fe(2+) as a cofactor.

It is found in the cytoplasm. The catalysed reaction is L-threonylcarbamoyladenylate + adenosine(37) in tRNA = N(6)-L-threonylcarbamoyladenosine(37) in tRNA + AMP + H(+). Functionally, required for the formation of a threonylcarbamoyl group on adenosine at position 37 (t(6)A37) in tRNAs that read codons beginning with adenine. Is involved in the transfer of the threonylcarbamoyl moiety of threonylcarbamoyl-AMP (TC-AMP) to the N6 group of A37, together with TsaE and TsaB. TsaD likely plays a direct catalytic role in this reaction. In Pectobacterium atrosepticum (strain SCRI 1043 / ATCC BAA-672) (Erwinia carotovora subsp. atroseptica), this protein is tRNA N6-adenosine threonylcarbamoyltransferase.